Here is a 403-residue protein sequence, read N- to C-terminus: Presqualene diphosphate synthase (403 aa).

3 residues coordinate Mg(2+): aspartate 84, glutamate 87, and aspartate 88.

This sequence belongs to the phytoene/squalene synthase family. Mg(2+) serves as cofactor.

It carries out the reaction 2 (2E,6E)-farnesyl diphosphate = presqualene diphosphate + diphosphate. Its function is as follows. Catalyzes the biosynthesis of presqualene diphosphate (PSPP). Works in combination with SSL-2 or SSL-3 to produce respectively squalene or botryococcene. In most other species, farnesyl diphosphate (FPP) is converted into squalene in a two-step reaction by a single enzyme. The chain is Presqualene diphosphate synthase (SSL-1) from Botryococcus braunii (Green alga).